Reading from the N-terminus, the 267-residue chain is Undecaprenyl-diphosphatase (267 aa).

The next 7 membrane-spanning stretches (helical) occupy residues 4 to 24 (LYAL…ISST), 41 to 61 (FWKS…IFVF), 69 to 89 (LDIW…GLFV), 96 to 116 (LFNG…FILI), 173 to 193 (AAEF…AYSI), 207 to 227 (IPLG…IKFF), and 239 to 259 (FGIY…SGIL).

Belongs to the UppP family.

It is found in the cell inner membrane. The enzyme catalyses di-trans,octa-cis-undecaprenyl diphosphate + H2O = di-trans,octa-cis-undecaprenyl phosphate + phosphate + H(+). Functionally, catalyzes the dephosphorylation of undecaprenyl diphosphate (UPP). Confers resistance to bacitracin. In Campylobacter jejuni subsp. jejuni serotype O:23/36 (strain 81-176), this protein is Undecaprenyl-diphosphatase.